Consider the following 202-residue polypeptide: Proteasome subunit beta 1 (202 aa).

The propeptide at 1–8 is removed in mature form; by autocatalysis; it reads MGEVVLPG. Thr9 acts as the Nucleophile in catalysis.

This sequence belongs to the peptidase T1B family. The 20S proteasome core is composed of 14 alpha and 14 beta subunits that assemble into four stacked heptameric rings, resulting in a barrel-shaped structure. The two inner rings, each composed of seven catalytic beta subunits, are sandwiched by two outer rings, each composed of seven alpha subunits. The catalytic chamber with the active sites is on the inside of the barrel. Has a gated structure, the ends of the cylinder being occluded by the N-termini of the alpha-subunits. Is capped at one or both ends by the proteasome regulatory ATPase, PAN.

It is found in the cytoplasm. It catalyses the reaction Cleavage of peptide bonds with very broad specificity.. Its activity is regulated as follows. The formation of the proteasomal ATPase PAN-20S proteasome complex, via the docking of the C-termini of PAN into the intersubunit pockets in the alpha-rings, triggers opening of the gate for substrate entry. Interconversion between the open-gate and close-gate conformations leads to a dynamic regulation of the 20S proteasome proteolysis activity. Functionally, component of the proteasome core, a large protease complex with broad specificity involved in protein degradation. This is Proteasome subunit beta 1 from Desulfurococcus amylolyticus (strain DSM 18924 / JCM 16383 / VKM B-2413 / 1221n) (Desulfurococcus kamchatkensis).